The primary structure comprises 1040 residues: Protocadherin-10 (1040 aa).

A signal peptide spans M1–S18. Cadherin domains are found at residues Q19 to F122, P123 to F250, D251 to I358, S359 to F463, S464 to I574, and N582 to G690. The Extracellular portion of the chain corresponds to Q19–T715. Residues G207–G223 show a composition bias toward gly residues. Residues G207 to Q228 form a disordered region. N273 carries N-linked (GlcNAc...) asparagine glycosylation. N-linked (GlcNAc...) asparagine glycosylation is present at N557. A compositionally biased stretch (gly residues) spans Q686–G697. Residues Q686–G708 are disordered. The chain crosses the membrane as a helical span at residues L716 to L736. Over A737 to C1040 the chain is Cytoplasmic. The segment at A899–N927 is disordered. Over residues D910 to T926 the composition is skewed to basic and acidic residues.

Moderately expressed in all regions of the brain examined, as well as in testis and ovary, and low expression in all other tissues tested.

Its subcellular location is the cell membrane. Its function is as follows. Potential calcium-dependent cell-adhesion protein. (Microbial infection) Acts as a receptor for Western equine encephalitis virus. The chain is Protocadherin-10 (PCDH10) from Homo sapiens (Human).